Reading from the N-terminus, the 701-residue chain is UvrABC system protein B (701 aa).

The Helicase ATP-binding domain occupies 35–422 (RRIQGGAADT…GGDVVEQVIR (388 aa)). 48 to 55 (GATGTGKT) is a binding site for ATP. The Beta-hairpin signature appears at 101–124 (YYDYYQPEAYVPQTDTYIEKDSSI). The Helicase C-terminal domain maps to 439 to 605 (QIDDLVHEIR…PLRKKIADIL (167 aa)). The tract at residues 620-648 (ARSRGEKRGTPTPRSGALSGPDRVAEQAK) is disordered. The UVR domain maps to 656–691 (AALVEQLTEQMHQAAADLQFELAARLRDEIKELKRE).

This sequence belongs to the UvrB family. In terms of assembly, forms a heterotetramer with UvrA during the search for lesions. Interacts with UvrC in an incision complex.

It localises to the cytoplasm. In terms of biological role, the UvrABC repair system catalyzes the recognition and processing of DNA lesions. A damage recognition complex composed of 2 UvrA and 2 UvrB subunits scans DNA for abnormalities. Upon binding of the UvrA(2)B(2) complex to a putative damaged site, the DNA wraps around one UvrB monomer. DNA wrap is dependent on ATP binding by UvrB and probably causes local melting of the DNA helix, facilitating insertion of UvrB beta-hairpin between the DNA strands. Then UvrB probes one DNA strand for the presence of a lesion. If a lesion is found the UvrA subunits dissociate and the UvrB-DNA preincision complex is formed. This complex is subsequently bound by UvrC and the second UvrB is released. If no lesion is found, the DNA wraps around the other UvrB subunit that will check the other stand for damage. This chain is UvrABC system protein B, found in Thermobifida fusca (strain YX).